We begin with the raw amino-acid sequence, 48 residues long: uncharacterized protein (48 aa).

The helical transmembrane segment at 20-37 (ILASPLFFANYVLHAAIH) threads the bilayer.

It localises to the membrane. This is an uncharacterized protein from Saccharomyces cerevisiae (strain ATCC 204508 / S288c) (Baker's yeast).